The primary structure comprises 359 residues: DNA polymerase IV (359 aa).

A UmuC domain is found at 6-186; it reads IIHVDMDAFY…LPIEAFWGVG (181 aa). Residues Asp-10 and Asp-104 each coordinate Mg(2+). Residue Glu-105 is part of the active site.

This sequence belongs to the DNA polymerase type-Y family. In terms of assembly, monomer. Mg(2+) is required as a cofactor.

It localises to the cytoplasm. The enzyme catalyses DNA(n) + a 2'-deoxyribonucleoside 5'-triphosphate = DNA(n+1) + diphosphate. In terms of biological role, poorly processive, error-prone DNA polymerase involved in untargeted mutagenesis. Copies undamaged DNA at stalled replication forks, which arise in vivo from mismatched or misaligned primer ends. These misaligned primers can be extended by PolIV. Exhibits no 3'-5' exonuclease (proofreading) activity. May be involved in translesional synthesis, in conjunction with the beta clamp from PolIII. The sequence is that of DNA polymerase IV from Akkermansia muciniphila (strain ATCC BAA-835 / DSM 22959 / JCM 33894 / BCRC 81048 / CCUG 64013 / CIP 107961 / Muc).